Consider the following 263-residue polypeptide: Lens fiber major intrinsic protein (263 aa).

At 1 to 12 (MWELRSASFWRA) the chain is on the cytoplasmic side. Residues 13–30 (IFAEFFATLFYVFFGLGA) form a helical membrane-spanning segment. Residues 31–40 (SLRWAPGPLH) lie on the Extracellular side of the membrane. A helical transmembrane segment spans residues 41–59 (VLQVALAFGLALATLVQAV). Over 60-63 (GHIS) the chain is Cytoplasmic. The discontinuously helical intramembrane region spans 64-76 (GAHVNPAVTFAFL). The short motif at 68-70 (NPA) is the NPA 1 element. Over 77 to 85 (VGSQMSLLR) the chain is Cytoplasmic. Residues 86–106 (AICYVVAQLLGAVAGAAVLYS) traverse the membrane as a helical segment. The Extracellular portion of the chain corresponds to 107-126 (VTPPAVRGNLALNTLHPGVS). The helical transmembrane segment at 127–147 (VGQATIVEIFLTLQFVLCIFA) threads the bilayer. Residues 148 to 157 (TYDERRNGRL) lie on the Cytoplasmic side of the membrane. Residues 158-175 (GSVALAVGFSLTLGHLFG) form a helical membrane-spanning segment. At 176–177 (MY) the chain is on the extracellular side. An intramembrane region (discontinuously helical) is located at residues 178–193 (YTGAGMNPARSFAPAI). Residues 184–186 (NPA) carry the NPA 2 motif. Over 194–200 (LTRNFTN) the chain is Extracellular. The chain crosses the membrane as a helical span at residues 201–218 (HWVYWVGPVIGAGLGSLL). The Cytoplasmic segment spans residues 219–263 (YDFLLFPRLKSVSERLSILKGTRPSESNGQPEVTGEPVELKTQAL). The tract at residues 227–237 (LKSVSERLSIL) is interaction with CALM. Residues Ser-235, Ser-243, and Ser-245 each carry the phosphoserine modification. The disordered stretch occupies residues 240–263 (TRPSESNGQPEVTGEPVELKTQAL).

Belongs to the MIP/aquaporin (TC 1.A.8) family. As to quaternary structure, homotetramer; each monomer provides an independent water pore. Two homotetramers on opposing membranes can dimerize, forming a cell-cell junction. Interacts with CALM; the calcium-calmodulin/CALM complex interacts with the cytoplasmic domains of two aquaporins, leading to channel closure. Interacts with BFSP1 (via C-terminus); prevents calcium-dependent inhibition of the water channel activity. In terms of processing, subject to partial proteolytic cleavage in the eye lens core. Partial proteolysis promotes interactions between tetramers from adjoining membranes. Fatty acylated at Met-1 and Lys-238. The acyl modifications, in decreasing order of ion abundance, are: oleoyl (C18:1) &gt; palmitoyl (C16:0) &gt; stearoyl (C18:0) &gt; eicosenoyl (C20:1) &gt; dihomo-gamma-linolenoyl (C20:3) &gt; palmitoleoyl (C16:1) &gt; eicosadienoyl (C20:2). As to expression, detected in eye lens (at protein level).

It is found in the cell membrane. Its subcellular location is the cell junction. It carries out the reaction H2O(in) = H2O(out). Its activity is regulated as follows. The water channel activity is inhibited by calcium through calmodulin/CALM. In terms of biological role, aquaporins form homotetrameric transmembrane channels, with each monomer independently mediating water transport across the plasma membrane along its osmotic gradient. Specifically expressed in lens fiber cells, this aquaporin is crucial for maintaining lens water homeostasis and transparency. Beyond water permeability, it also acts as a cell-to-cell adhesion molecule, forming thin junctions between lens fiber cells that are essential for maintaining the ordered structure and transparency of the lens. The polypeptide is Lens fiber major intrinsic protein (Ovis aries (Sheep)).